Here is a 253-residue protein sequence, read N- to C-terminus: MPSVDLNSDLAEGFGIWHLTEDEALMDIVSSANIACGLHAGDPEIMAKAFAYAKSRGVAVGAHPGFPDLWGFGRRRMPFTPGEIERLVAYQVGAAQALATYSGHRITYVKVHGALGNIAEQEPEVAVAVANAVKAVDPSLVVLAGPLGAQAPATRDAGLRLAAEIFADRGYTEQGHLIPRSQPGAMIHDPVAAADRIIAMVQSGAVITAQGTHLPTSIDSICVHGDGPKAVETARYVRERLEAAGIAIAPFAP.

The protein belongs to the LamB/PxpA family. As to quaternary structure, forms a complex composed of PxpA, PxpB and PxpC.

It carries out the reaction 5-oxo-L-proline + ATP + 2 H2O = L-glutamate + ADP + phosphate + H(+). Functionally, catalyzes the cleavage of 5-oxoproline to form L-glutamate coupled to the hydrolysis of ATP to ADP and inorganic phosphate. The chain is 5-oxoprolinase subunit A from Azorhizobium caulinodans (strain ATCC 43989 / DSM 5975 / JCM 20966 / LMG 6465 / NBRC 14845 / NCIMB 13405 / ORS 571).